We begin with the raw amino-acid sequence, 418 residues long: Cell division protein FtsA (418 aa).

This sequence belongs to the FtsA/MreB family. Self-interacts. Interacts with FtsZ.

The protein resides in the cell inner membrane. Cell division protein that is involved in the assembly of the Z ring. May serve as a membrane anchor for the Z ring. The sequence is that of Cell division protein FtsA from Buchnera aphidicola subsp. Schizaphis graminum (strain Sg).